Reading from the N-terminus, the 278-residue chain is Large ribosomal subunit protein uL2 (278 aa).

Positions 224–278 are disordered; sequence VAMNPVDHPHGGGEGRTSGGRNPVTPWGVPTKGKKTRSNKRTDTFILSSRHNRKK.

It belongs to the universal ribosomal protein uL2 family. As to quaternary structure, part of the 50S ribosomal subunit. Forms a bridge to the 30S subunit in the 70S ribosome.

Its function is as follows. One of the primary rRNA binding proteins. Required for association of the 30S and 50S subunits to form the 70S ribosome, for tRNA binding and peptide bond formation. It has been suggested to have peptidyltransferase activity; this is somewhat controversial. Makes several contacts with the 16S rRNA in the 70S ribosome. This Methylorubrum extorquens (strain CM4 / NCIMB 13688) (Methylobacterium extorquens) protein is Large ribosomal subunit protein uL2.